The following is a 488-amino-acid chain: Teichuronic acid biosynthesis protein TuaE (488 aa).

14 consecutive transmembrane segments (helical) span residues 7 to 29 (AVHTLALLAAAIFGVVLLLGAIH), 35 to 57 (MQMAAVLAVLAIGLFLLTLATAF), 64 to 86 (FMAVIYILIACTFLNNAFFAIHL), 91 to 110 (LFLYRLLLIAAGCLHIFGMV), 122 to 144 (LQVKGILLFFAFWFIYGLVSLLW), 154 to 173 (YLALLAMGIFFIYLIVMYVQ), 180 to 202 (IVYAIWLVMTVFLMIIGFYNHIT), 222 to 244 (PTSVFFNQNDFATFLSISFFFYI), 257 to 274 (AIGLVLSLCALYLIFATG), 279 to 298 (LLGIFAGIAVYIFIVLPPVL), 303 to 322 (IWLSAAGIALFAVLFASKIY), 354 to 376 (NAWHFFLDSYGFGVGAGNVSYYL), 397 to 419 (ILANFGLFIMLGYLSVYAYLIWV), and 459 to 476 (LFFHWVFMALVIAAVNVL).

The protein resides in the cell membrane. It functions in the pathway cell wall biogenesis; teichuronic acid biosynthesis. In terms of biological role, might be involved in the polymerization of teichuronic acid repeating units after their translocation to the outer surface of the membrane. In Bacillus subtilis (strain 168), this protein is Teichuronic acid biosynthesis protein TuaE (tuaE).